Consider the following 360-residue polypeptide: Peptide chain release factor 1 (360 aa).

At glutamine 237 the chain carries N5-methylglutamine.

It belongs to the prokaryotic/mitochondrial release factor family. Post-translationally, methylated by PrmC. Methylation increases the termination efficiency of RF1.

The protein resides in the cytoplasm. In terms of biological role, peptide chain release factor 1 directs the termination of translation in response to the peptide chain termination codons UAG and UAA. This Pseudomonas putida (strain GB-1) protein is Peptide chain release factor 1.